A 290-amino-acid chain; its full sequence is 33 kDa chaperonin (290 aa).

Intrachain disulfides connect Cys235-Cys237 and Cys268-Cys271.

Belongs to the HSP33 family. Post-translationally, under oxidizing conditions two disulfide bonds are formed involving the reactive cysteines. Under reducing conditions zinc is bound to the reactive cysteines and the protein is inactive.

Its subcellular location is the cytoplasm. Functionally, redox regulated molecular chaperone. Protects both thermally unfolding and oxidatively damaged proteins from irreversible aggregation. Plays an important role in the bacterial defense system toward oxidative stress. The protein is 33 kDa chaperonin of Streptococcus pyogenes serotype M6 (strain ATCC BAA-946 / MGAS10394).